The chain runs to 295 residues: Aquaporin NIP2-1 (295 aa).

Transmembrane regions (helical) follow at residues 49-69 (VVSE…AAGI) and 83-103 (SVAG…ISGA). The NPA 1 motif lies at 106-108 (NPA). 3 consecutive transmembrane segments (helical) span residues 124–146 (VPFY…KAVL), 164–184 (SLVI…AVAT), and 192–212 (LAGL…GAVS). The NPA 2 motif lies at 217 to 219 (NPA). The chain crosses the membrane as a helical span at residues 230 to 250 (LYTGLWIYFLGPVLGTLSGAW).

It belongs to the MIP/aquaporin (TC 1.A.8) family. NIP (TC 1.A.8.12) subfamily.

It is found in the membrane. Its function is as follows. Aquaporins facilitate the transport of water and small neutral solutes across cell membranes. This chain is Aquaporin NIP2-1 (NIP2-1), found in Zea mays (Maize).